We begin with the raw amino-acid sequence, 334 residues long: UDP-N-acetylglucosamine 4,6-dehydratase (inverting) (334 aa).

NADP(+) is bound by residues 13–16, 37–42, 61–62, Ala-81, Lys-85, and 123–124; these read TGSF, SRDELK, DV, and LS. Residue Lys-85 coordinates substrate. Lys-127 is a catalytic residue. NADP(+)-binding residues include Tyr-135 and Lys-139. Residue Asn-167 coordinates substrate. Position 168 to 172 (168 to 172) interacts with NADP(+); sequence VVGSR. Substrate-binding residues include Val-175, Thr-193, Arg-252, and Glu-255.

This sequence belongs to the polysaccharide synthase family. As to quaternary structure, homohexamer. The cofactor is NADP(+).

It catalyses the reaction UDP-N-acetyl-alpha-D-glucosamine = UDP-2-acetamido-2,6-dideoxy-beta-L-arabino-hex-4-ulose + H2O. Its function is as follows. Catalyzes the first step in the biosynthesis of pseudaminic acid, a sialic-acid-like sugar that is used to modify flagellin. Has both C6 dehydratase and C5 epimerase activities that result in the production of both UDP-2-acetamido-2,6-dideoxy-beta-L-arabino-4-hexulose and UDP-2-acetamido-2,6-dideoxy-alpha-D-xylo-4-hexulose. This chain is UDP-N-acetylglucosamine 4,6-dehydratase (inverting) (pseB), found in Campylobacter jejuni subsp. jejuni serotype O:2 (strain ATCC 700819 / NCTC 11168).